A 458-amino-acid chain; its full sequence is Phosphomethylpyrimidine synthase (458 aa).

Substrate contacts are provided by residues Asn-80, Met-109, Tyr-139, His-175, 195–197, 236–239, and Glu-275; these read SRG and DSLR. His-279 lines the Zn(2+) pocket. Tyr-302 is a substrate binding site. His-343 is a Zn(2+) binding site. Positions 423, 426, and 431 each coordinate [4Fe-4S] cluster.

Belongs to the ThiC family. [4Fe-4S] cluster is required as a cofactor.

It carries out the reaction 5-amino-1-(5-phospho-beta-D-ribosyl)imidazole + S-adenosyl-L-methionine = 4-amino-2-methyl-5-(phosphooxymethyl)pyrimidine + CO + 5'-deoxyadenosine + formate + L-methionine + 3 H(+). It participates in cofactor biosynthesis; thiamine diphosphate biosynthesis. Catalyzes the synthesis of the hydroxymethylpyrimidine phosphate (HMP-P) moiety of thiamine from aminoimidazole ribotide (AIR) in a radical S-adenosyl-L-methionine (SAM)-dependent reaction. In Acaryochloris marina (strain MBIC 11017), this protein is Phosphomethylpyrimidine synthase.